The sequence spans 1286 residues: Structural maintenance of chromosomes protein 4 (1286 aa).

The tract at residues 1–51 is disordered; that stretch reads MRRKGTKPSTACHQEEGPPPSQDGAHSDEEMEQPAGEAESAAPAKPPGEEL. Phosphoserine occurs at positions 21, 27, and 40. 111–118 contacts ATP; it reads GPNGSGKS. Position 141 is a phosphoserine (S141). Residues 270–589 are a coiled coil; it reads RRVEILNEHR…KVEEAKSSLA (320 aa). Residues K379 and K677 each carry the N6-acetyllysine modification. Positions 611–725 constitute an SMC hinge domain; the sequence is PGIYGRLGDL…ANNLDQATRV (115 aa). Coiled-coil stretches lie at residues 768-1018 and 1068-1133; these read EISV…KLEQ and ESIT…LNEF. S980 is modified (phosphoserine).

The protein belongs to the SMC family. SMC4 subfamily. Forms a heterodimer with SMC2. Component of the condensin complex, which contains the SMC2 and SMC4 heterodimer, and three non SMC subunits that probably regulate the complex: BRRN1/CAPH, CNAP1/CAPD2 and CAPG.

The protein resides in the nucleus. Its subcellular location is the cytoplasm. The protein localises to the chromosome. In terms of biological role, central component of the condensin complex, a complex required for conversion of interphase chromatin into mitotic-like condense chromosomes. The condensin complex probably introduces positive supercoils into relaxed DNA in the presence of type I topoisomerases and converts nicked DNA into positive knotted forms in the presence of type II topoisomerases. The sequence is that of Structural maintenance of chromosomes protein 4 (Smc4) from Mus musculus (Mouse).